A 244-amino-acid polypeptide reads, in one-letter code: tRNA pseudouridine synthase B (244 aa).

Asp-46 functions as the Nucleophile in the catalytic mechanism.

Belongs to the pseudouridine synthase TruB family. Type 1 subfamily.

The enzyme catalyses uridine(55) in tRNA = pseudouridine(55) in tRNA. In terms of biological role, responsible for synthesis of pseudouridine from uracil-55 in the psi GC loop of transfer RNAs. This chain is tRNA pseudouridine synthase B, found in Bordetella bronchiseptica (strain ATCC BAA-588 / NCTC 13252 / RB50) (Alcaligenes bronchisepticus).